The primary structure comprises 83 residues: Small ribosomal subunit protein uS17 (83 aa).

Belongs to the universal ribosomal protein uS17 family. In terms of assembly, part of the 30S ribosomal subunit.

One of the primary rRNA binding proteins, it binds specifically to the 5'-end of 16S ribosomal RNA. This is Small ribosomal subunit protein uS17 from Nitratiruptor sp. (strain SB155-2).